The primary structure comprises 62 residues: Large ribosomal subunit protein uL30 (62 aa).

It belongs to the universal ribosomal protein uL30 family. As to quaternary structure, part of the 50S ribosomal subunit.

This is Large ribosomal subunit protein uL30 from Gluconobacter oxydans (strain 621H) (Gluconobacter suboxydans).